Consider the following 427-residue polypeptide: MKFQTIKGTKDILPSEIHKWHYVENTVRGVFQRFGYNEIRTPVFEQTALFQRGIGETTDIVGKEMYSFQPDPESESLTLRPEMTAPVMRAYLQHSLSGTSPATKVFYISEIFRKERPQAGRQRQFWQFGCECIGSDQPEADAEVILLMTEIYRQLGIKNFTLRLNSLGETESRLAHREALQTYLKPHFDLLDEISKTRFEKNPLRILDSKNPALAEIIAGAPHITEFLDDASKAHFQTVQTYLKNAGLDFTVDPTLVRGLDYYSRTAFELVSTDLGAQDALAGGGRYDSLATVLGAKNSSAAVGFAAGIERLLIIMEKLDLFQAVLPPAPLLFIATQSPVAKEWAFQTVNRLRTEGIHVALDLLGRSLKAQMREANRTHAKYVLIVGEEELSTGRFQLKHLQTSEQVELSEADIFTKMQTETTQDLG.

This sequence belongs to the class-II aminoacyl-tRNA synthetase family. As to quaternary structure, homodimer.

It localises to the cytoplasm. It catalyses the reaction tRNA(His) + L-histidine + ATP = L-histidyl-tRNA(His) + AMP + diphosphate + H(+). This Chloroherpeton thalassium (strain ATCC 35110 / GB-78) protein is Histidine--tRNA ligase.